The following is a 121-amino-acid chain: Small ribosomal subunit protein uS13 (121 aa).

Residues 95–121 (GLPVRGQKTKTNARTRKGKRKTVGAKS) are disordered.

Belongs to the universal ribosomal protein uS13 family. As to quaternary structure, part of the 30S ribosomal subunit. Forms a loose heterodimer with protein S19. Forms two bridges to the 50S subunit in the 70S ribosome.

Functionally, located at the top of the head of the 30S subunit, it contacts several helices of the 16S rRNA. In the 70S ribosome it contacts the 23S rRNA (bridge B1a) and protein L5 of the 50S subunit (bridge B1b), connecting the 2 subunits; these bridges are implicated in subunit movement. Contacts the tRNAs in the A and P-sites. The protein is Small ribosomal subunit protein uS13 of Campylobacter jejuni subsp. jejuni serotype O:23/36 (strain 81-176).